The primary structure comprises 349 residues: SUMO-activating enzyme subunit 1 (349 aa).

N-acetylmethionine is present on M1. Position 2 is an N-acetylvaline; in SUMO-activating enzyme subunit 1, N-terminally processed (V2). Phosphoserine is present on S15. Position 201 is an N6-acetyllysine (K201).

It belongs to the ubiquitin-activating E1 family. In terms of assembly, heterodimer of SAE1 and UBA2/SAE2. The heterodimer corresponds to the two domains that are encoded on a single polypeptide chain in ubiquitin-activating enzyme E1. Interacts with UBE2I.

The protein localises to the nucleus. It participates in protein modification; protein sumoylation. Functionally, the heterodimer acts as an E1 ligase for SUMO1, SUMO2, SUMO3, and probably SUMO4. It mediates ATP-dependent activation of SUMO proteins followed by formation of a thioester bond between a SUMO protein and a conserved active site cysteine residue on UBA2/SAE2. This is SUMO-activating enzyme subunit 1 (Sae1) from Rattus norvegicus (Rat).